The sequence spans 153 residues: MAIITGNLVATELKFGIVCARFNDFINDKLLSGAIDTLVRHGASESDIDTAWVPGAFEIPLVAKKMAESGKYDAVICLGTVIRGSTTHYDYVCNEAAKGIGAVSLQTGVPVIFGVLTTENIEQAIERAGTKAGNKGSECALGAIEMVNVLKGL.

5-amino-6-(D-ribitylamino)uracil contacts are provided by residues F22, 56 to 58 (AFE), and 80 to 82 (TVI). (2S)-2-hydroxy-3-oxobutyl phosphate is bound at residue 85-86 (ST). H88 functions as the Proton donor in the catalytic mechanism. Position 113 (F113) interacts with 5-amino-6-(D-ribitylamino)uracil. R127 contributes to the (2S)-2-hydroxy-3-oxobutyl phosphate binding site.

This sequence belongs to the DMRL synthase family. Forms an icosahedral capsid composed of 60 subunits, arranged as a dodecamer of pentamers.

The catalysed reaction is (2S)-2-hydroxy-3-oxobutyl phosphate + 5-amino-6-(D-ribitylamino)uracil = 6,7-dimethyl-8-(1-D-ribityl)lumazine + phosphate + 2 H2O + H(+). Its pathway is cofactor biosynthesis; riboflavin biosynthesis; riboflavin from 2-hydroxy-3-oxobutyl phosphate and 5-amino-6-(D-ribitylamino)uracil: step 1/2. In terms of biological role, catalyzes the formation of 6,7-dimethyl-8-ribityllumazine by condensation of 5-amino-6-(D-ribitylamino)uracil with 3,4-dihydroxy-2-butanone 4-phosphate. This is the penultimate step in the biosynthesis of riboflavin. The chain is 6,7-dimethyl-8-ribityllumazine synthase from Glaesserella parasuis serovar 5 (strain SH0165) (Haemophilus parasuis).